We begin with the raw amino-acid sequence, 734 residues long: Cell surface glycoprotein gp138B (734 aa).

Residues 1 to 20 form the signal peptide; the sequence is MKIILTLSIFLICFLQLGQS. 16 N-linked (GlcNAc...) asparagine glycosylation sites follow: Asn-58, Asn-89, Asn-124, Asn-198, Asn-224, Asn-392, Asn-420, Asn-435, Asn-482, Asn-498, Asn-523, Asn-596, Asn-605, Asn-614, Asn-621, and Asn-630. One can recognise an IPT/TIG domain in the interval 504-592; that stretch reads PFIKSYGFLE…SSNEVTFYYF (89 aa). A disordered region spans residues 678-712; the sequence is GETPTPSTTPSTTPSTTPSTTPSSTPTQSPGDDGS. The segment covering 680–712 has biased composition (low complexity); the sequence is TPTPSTTPSTTPSTTPSTTPSSTPTQSPGDDGS. Repeat copies occupy residues 683-686, 687-690, 691-694, and 695-698. Residues 683-698 form a 4 X 4 AA tandem repeats of P-S-T-T region; it reads PSTTPSTTPSTTPSTT. The GPI-like-anchor amidated glycine moiety is linked to residue Gly-708. Positions 709-734 are cleaved as a propeptide — removed in mature form; the sequence is DDGSTSSTLSISFYLITLLLLTQQFI.

In terms of processing, the sugar chains may play important roles in cell fusion. Post-translationally, the GPI-like-anchor contains a phosphoceramide group, rather than a phosphatidyl group.

It is found in the cell membrane. In terms of biological role, involved in the sexual cell fusion of D.discoideum. In Dictyostelium discoideum (Social amoeba), this protein is Cell surface glycoprotein gp138B (GP138B).